Reading from the N-terminus, the 203-residue chain is Small ribosomal subunit protein uS4 (203 aa).

The 61-residue stretch at 92 to 152 (LRLATVLLRA…EKSRKLVPFI (61 aa)) folds into the S4 RNA-binding domain.

This sequence belongs to the universal ribosomal protein uS4 family. Part of the 30S ribosomal subunit. Contacts protein S5. The interaction surface between S4 and S5 is involved in control of translational fidelity.

One of the primary rRNA binding proteins, it binds directly to 16S rRNA where it nucleates assembly of the body of the 30S subunit. Its function is as follows. With S5 and S12 plays an important role in translational accuracy. This chain is Small ribosomal subunit protein uS4, found in Thermobifida fusca (strain YX).